Reading from the N-terminus, the 523-residue chain is Vanin-like protein 3 (523 aa).

The signal sequence occupies residues M1–T19. The CN hydrolase domain occupies Y29–L298. A glycan (N-linked (GlcNAc...) asparagine) is linked at N64. E74 (proton acceptor) is an active-site residue. The active-site Proton donor is K167. N-linked (GlcNAc...) asparagine glycosylation is found at N177 and N192. The active-site Nucleophile is C200. Residues N330 and N468 are each glycosylated (N-linked (GlcNAc...) asparagine). The GPI-anchor amidated asparagine moiety is linked to residue N498. The propeptide at G499–E523 is removed in mature form.

It belongs to the carbon-nitrogen hydrolase superfamily. BTD/VNN family. In terms of tissue distribution, expressed in third instar larvae.

The protein resides in the cell membrane. The protein is Vanin-like protein 3 of Drosophila melanogaster (Fruit fly).